The primary structure comprises 661 residues: Lateral signaling target protein 2 (661 aa).

Residues 294-432 (VPEDTSSTLT…SDDEITDDVQ (139 aa)) are disordered. Residues 297–310 (DTSSTLTMSDFRTN) are compositionally biased toward polar residues. 2 stretches are compositionally biased toward low complexity: residues 330–360 (SDSTSSLDSSVQDSSSETTSLASSALASPHS) and 381–393 (TNSNSSNEVTESP). A compositionally biased stretch (acidic residues) spans 394 to 411 (ETIEEPDNVDMEESSESE). Residues 412 to 422 (VDTHIDETRNE) show a composition bias toward basic and acidic residues. The FYVE-type zinc-finger motif lies at 566–626 (DEDCEQCTAC…VCNLCYVHRL (61 aa)). Zn(2+)-binding residues include Cys572, Cys575, Cys588, Cys591, Cys596, Cys599, Cys618, and Cys621. Over residues 641–650 (NGATVPSVTE) the composition is skewed to polar residues. The tract at residues 641-661 (NGATVPSVTEQQSAQTASASS) is disordered. Positions 651–661 (QQSAQTASASS) are enriched in low complexity.

The protein belongs to the lst-2 family. In terms of tissue distribution, expressed in vulval precursor cells (VPCs).

Negative regulator of epidermal growth factor receptor (EGFR) signaling. The polypeptide is Lateral signaling target protein 2 (lst-2) (Caenorhabditis elegans).